The sequence spans 1733 residues: Polyketide synthase Pks13 (1733 aa).

The Carrier 1 domain occupies 17-95; the sequence is ELTVPEMRQW…SLATRIIEGE (79 aa). Ser-55 is modified (O-(pantetheine 4'-phosphoryl)serine). One can recognise a Ketosynthase family 3 (KS3) domain in the interval 116 to 541; the sequence is RVDIAIVGLS…GANAHVVVRE (426 aa). Catalysis depends on Cys-287, which acts as the Acyl-thioester intermediate; for beta-ketoacyl synthase activity. Residues His-423 and His-463 each act as for beta-ketoacyl synthase activity in the active site. Over residues 548-560 the composition is skewed to basic and acidic residues; it reads VEKEPEPEPEPKA. Residues 548-567 are disordered; that stretch reads VEKEPEPEPEPKAAAEPAEA. The tract at residues 713-1034 is acyltransferase; that stretch reads VWVLAGFGAQ…MVSTMAQLYV (322 aa). Ser-801 functions as the Acyl-ester intermediate; for acyltransferase activity in the catalytic mechanism. One can recognise a Carrier 2 domain in the interval 1232-1309; that stretch reads ETIAERLGLI…KLIEYAVEHR (78 aa). Ser-1266 carries the O-(pantetheine 4'-phosphoryl)serine modification. The disordered stretch occupies residues 1344–1368; the sequence is PVDSEAGVALPSPQNGEQPNPTGPA. Residues 1470 to 1563 are thioesterase-like; it reads PVFVFHPAGG…RFVGLIDAVR (94 aa). Ser-1533 functions as the For thioesterase-like activity in the catalytic mechanism.

4'-phosphopantetheine is transferred from CoA to specific serines of apo-Pks13 by PptT.

It participates in lipid metabolism; mycolic acid biosynthesis. With respect to regulation, the presence of FadD32 is necessary for the transfer of the acyl chain from the AMP carrier onto Pks13. In terms of biological role, involved in the biosynthesis of mycolic acids. Forms, with FadD32, the initiation module of the mycolic condensation system. Synthesizes, in coupled reaction with FadD32, the biosynthetic precursors of mycolic acids, alpha-alkyl beta-ketoacids, via the condensation of two long chain fatty acid derivatives, a very long meromycoloyl-AMP and a shorter 2-carboxyacyl-CoA. The acyl chain of the acyl-AMP produced by FadD32 is specifically transferred onto the N-terminal ACP domain of Pks13, and then transferred onto the KS domain. The extender unit carboxyacyl-CoA is specifically loaded onto the AT domain, which catalyzes the covalent attachment of the carboxyacyl chain to its active site, and its subsequent transfer onto the P-pant arm of the C-terminal ACP domain. The KS domain catalyzes the condensation between the two loaded fatty acyl chains to produce an alpha-alkyl beta-ketothioester linked to the C-ACP domain. Then, the thioesterase-like domain acts as a transacylase and is responsible for both the release and the transfer of the alpha-alkyl beta-ketoacyl chain onto a polyol acceptor molecule, particularly trehalose, leading to the formation of the trehalose monomycolate precursor. This chain is Polyketide synthase Pks13, found in Mycobacterium tuberculosis (strain ATCC 25618 / H37Rv).